The following is a 437-amino-acid chain: Probable eukaryotic translation initiation factor 5-2 (437 aa).

29-36 (GKGNGIKT) is a GTP binding site. 2 stretches are compositionally biased toward basic and acidic residues: residues 148-179 (EQKK…EQRK) and 191-212 (KDSK…HDEN). Disordered regions lie at residues 148–231 (EQKK…WQTD) and 262–284 (EKKA…PPQE). The residue at position 201 (serine 201) is a Phosphoserine; by CK2. Residues 213 to 226 (ALEVDEDEDDDDGV) show a composition bias toward acidic residues. Threonine 230 carries the phosphothreonine; by CK2 modification. The W2 domain maps to 278–436 (ENPPPQEKNL…QSAESESEEE (159 aa)). Serine 428, serine 431, and serine 433 each carry phosphoserine; by CK2.

It belongs to the eIF-2-beta/eIF-5 family. In terms of processing, phosphorylated at Ser-201, Thr-230, Ser-428, Ser-431, and Ser-433 by CK2.

Functionally, catalyzes the hydrolysis of GTP bound to the 40S ribosomal initiation complex (40S.mRNA.Met-tRNA[F].eIF-2.GTP) with the subsequent joining of a 60S ribosomal subunit resulting in the release of eIF-2 and the guanine nucleotide. The subsequent joining of a 60S ribosomal subunit results in the formation of a functional 80S initiation complex (80S.mRNA.Met-tRNA[F]). The polypeptide is Probable eukaryotic translation initiation factor 5-2 (Arabidopsis thaliana (Mouse-ear cress)).